Consider the following 954-residue polypeptide: Glycine dehydrogenase (decarboxylating) (954 aa).

Lys704 carries the N6-(pyridoxal phosphate)lysine modification.

This sequence belongs to the GcvP family. The glycine cleavage system is composed of four proteins: P, T, L and H. Pyridoxal 5'-phosphate is required as a cofactor.

The catalysed reaction is N(6)-[(R)-lipoyl]-L-lysyl-[glycine-cleavage complex H protein] + glycine + H(+) = N(6)-[(R)-S(8)-aminomethyldihydrolipoyl]-L-lysyl-[glycine-cleavage complex H protein] + CO2. In terms of biological role, the glycine cleavage system catalyzes the degradation of glycine. The P protein binds the alpha-amino group of glycine through its pyridoxal phosphate cofactor; CO(2) is released and the remaining methylamine moiety is then transferred to the lipoamide cofactor of the H protein. This Allorhizobium ampelinum (strain ATCC BAA-846 / DSM 112012 / S4) (Agrobacterium vitis (strain S4)) protein is Glycine dehydrogenase (decarboxylating).